A 136-amino-acid chain; its full sequence is MIPGEIITKSTEVEINNHHPETVIEVENTGDRPIQVGSHFHFYEANAALDFEREMAYGKHLDIPAGAAVRFEPGDKKEVQLVEYAGKRKIFGFRGMVNGPIDESRVYRPTDENDEYAGVFGDNGAENVNKKGGKRS.

The tract at residues 113 to 136 (NDEYAGVFGDNGAENVNKKGGKRS) is disordered.

This sequence belongs to the urease beta subunit family. As to quaternary structure, heterotrimer of UreA (gamma), UreB (beta) and UreC (alpha) subunits. Three heterotrimers associate to form the active enzyme.

It localises to the cytoplasm. The catalysed reaction is urea + 2 H2O + H(+) = hydrogencarbonate + 2 NH4(+). The protein operates within nitrogen metabolism; urea degradation; CO(2) and NH(3) from urea (urease route): step 1/1. The protein is Urease subunit beta of Staphylococcus aureus (strain USA300).